Reading from the N-terminus, the 234-residue chain is Glucosamine-6-phosphate deaminase (234 aa).

The Proton acceptor; for enolization step role is filled by aspartate 62. The active-site For ring-opening step is the asparagine 128. Histidine 130 functions as the Proton acceptor; for ring-opening step in the catalytic mechanism. Glutamate 135 serves as the catalytic For ring-opening step.

It belongs to the glucosamine/galactosamine-6-phosphate isomerase family. NagB subfamily.

It carries out the reaction alpha-D-glucosamine 6-phosphate + H2O = beta-D-fructose 6-phosphate + NH4(+). Its pathway is amino-sugar metabolism; N-acetylneuraminate degradation; D-fructose 6-phosphate from N-acetylneuraminate: step 5/5. Catalyzes the reversible isomerization-deamination of glucosamine 6-phosphate (GlcN6P) to form fructose 6-phosphate (Fru6P) and ammonium ion. The sequence is that of Glucosamine-6-phosphate deaminase from Streptococcus equi subsp. zooepidemicus (strain H70).